Consider the following 104-residue polypeptide: MSVFKKTYVLKLYVAGNTPNSVRALKTLKNILEEEFQGVYALKVIDVLKNPQLAEEDKILATPTLAKVLPPPVRKIIGDLSDREKVLIGLDLLYEEIRERENDS.

This sequence belongs to the KaiB family. In terms of assembly, the KaiABC complex composition changes during the circadian cycle to control KaiC phosphorylation. Complexes KaiC(6), KaiA(2-4):KaiC(6), KaiB(6):KaiC(6) and KaiC(6):KaiB(6):KaiA(12) are among the most important forms, many form cooperatively. Undergoes a major conformational rearrangment; in the free state forms homotetramers as a dimer of dimers. When bound to the CI domain of KaiC switches to a monomeric thioredoxin-fold (KaiB(fs)). KaiB(fs) binds CikA, leading it to dephosphorylate phospho-RpaA.

Key component of the KaiABC oscillator complex, which constitutes the main circadian regulator in cyanobacteria. Complex composition changes during the circadian cycle to control KaiC phosphorylation. KaiA stimulates KaiC autophosphorylation, while KaiB sequesters KaiA, leading to KaiC autodephosphorylation. Phospho-Ser-431 KaiC accumulation triggers binding of KaiB to form the KaiB(6):KaiC(6) complex, leading to changes in output regulators CikA and SasA. KaiB switches to a thioredoxin-like fold (KaiB(fs)) when bound to KaiC. KaiB(6):KaiC(6) formation exposes a site for KaiA binding that sequesters KaiA from KaiC, making the KaiC(6):KaiB(6):KaiA(12) complex that results in KaiC autodephosphorylation. Functionally, a metamorphic protein which reversibly switches between an inactive tetrameric fold and a rare, thioredoxin-like monomeric fold (KaiB(fs)). KaiB(fs) binds phospho-KaiC, KaiA and CikA. KaiA and CikA compete for binding to KaiB(fs), and KaiB(fs) and SasA compete for binding to KaiC, thus the clock oscillator and output signal pathway are tightly coupled. This Microcystis aeruginosa (strain NIES-843 / IAM M-2473) protein is Circadian clock oscillator protein KaiB.